The following is a 203-amino-acid chain: Small ribosomal subunit protein eS1 (203 aa).

The protein belongs to the eukaryotic ribosomal protein eS1 family.

The polypeptide is Small ribosomal subunit protein eS1 (Methanosarcina acetivorans (strain ATCC 35395 / DSM 2834 / JCM 12185 / C2A)).